Consider the following 168-residue polypeptide: UPF0304 protein MJECS11 (168 aa).

It belongs to the UPF0304 family.

The chain is UPF0304 protein MJECS11 from Methanocaldococcus jannaschii (strain ATCC 43067 / DSM 2661 / JAL-1 / JCM 10045 / NBRC 100440) (Methanococcus jannaschii).